A 147-amino-acid chain; its full sequence is Low molecular weight protein-tyrosine-phosphatase Wzb (147 aa).

The Nucleophile role is filled by cysteine 9. Residue arginine 15 is part of the active site. Aspartate 115 serves as the catalytic Proton donor.

Belongs to the low molecular weight phosphotyrosine protein phosphatase family.

The catalysed reaction is O-phospho-L-tyrosyl-[protein] + H2O = L-tyrosyl-[protein] + phosphate. It functions in the pathway glycan metabolism; exopolysaccharide biosynthesis. In terms of biological role, dephosphorylates Wzc. Required for the extracellular polysaccharide colanic acid synthesis. Probably involved in the export of colanic acid from the cell to medium. Involved in protection of cells against contact-dependent growth inhibition (CDI). The polypeptide is Low molecular weight protein-tyrosine-phosphatase Wzb (wzb) (Escherichia coli O157:H7).